Reading from the N-terminus, the 456-residue chain is MSISESSPAATSLPNGDCGRPRARSGGNRVTVVLGAQWGDEGKGKVVDLLAQDADIVCRCQGGNNAGHTVVVDSVEYDFHLLPSGIINPNVTAFIGNGVVIHLPGLFEEAEKNVQKGKGLDGWEKRLIISDRAHIVFDFHQAADGIQEQQRQEQAGKNLGTTKKGIGPVYSSKAARSGLRMCDLVSDFDGFSERFKVLANQYKSIYPTLEIDIEGELQQLKGYMERIKPMVKDGVYFLYEALHGPPKKILVEGANAALLDIDFGTYPFVTSSNCTVGGVCTGLGMPPQNVGEVYGVVKAYTTRVGIGAFPTEQDNEIGELLQTRGREFGVTTGRKRRCGWLDLVSLKYAHMINGFTALALTKLDILDMFTEIKVGVAYKLDGETIPHFPANQEVLNKVEVQYKTLPGWNTDISNARTFKELPVNAQNYVRFIEDELQIPVKWIGVGKSRESMIQLF.

The span at 1–14 shows a compositional bias: polar residues; that stretch reads MSISESSPAATSLP. The disordered stretch occupies residues 1 to 24; it reads MSISESSPAATSLPNGDCGRPRAR. GTP contacts are provided by residues 39–45 and 67–69; these read GDEGKGK and GHT. Aspartate 40 (proton acceptor) is an active-site residue. Residues aspartate 40 and glycine 67 each contribute to the Mg(2+) site. Aspartate 40 contacts substrate. IMP is bound by residues 40–43, 65–68, threonine 162, arginine 176, asparagine 255, threonine 270, and arginine 334; these read DEGK and NAGH. Histidine 68 functions as the Proton donor in the catalytic mechanism. 330–336 serves as a coordination point for substrate; that stretch reads VTTGRKR. GTP is bound by residues arginine 336, 362 to 364, and 444 to 447; these read KLD and GVGK.

Belongs to the adenylosuccinate synthetase family. In terms of assembly, homodimer. The cofactor is Mg(2+).

It localises to the cytoplasm. It is found in the mitochondrion. It carries out the reaction IMP + L-aspartate + GTP = N(6)-(1,2-dicarboxyethyl)-AMP + GDP + phosphate + 2 H(+). It functions in the pathway purine metabolism; AMP biosynthesis via de novo pathway; AMP from IMP: step 1/2. Inhibited competitively by AMP and IMP and non-competitively by fructose 1,6-bisphosphate. Functionally, plays an important role in the de novo pathway and in the salvage pathway of purine nucleotide biosynthesis. Catalyzes the first committed step in the biosynthesis of AMP from IMP. This chain is Adenylosuccinate synthetase isozyme 2 (Adss2), found in Mus musculus (Mouse).